A 277-amino-acid polypeptide reads, in one-letter code: Putative phosphoenolpyruvate synthase regulatory protein (277 aa).

157 to 164 (GVSRCGKT) is a binding site for ADP.

This sequence belongs to the pyruvate, phosphate/water dikinase regulatory protein family. PSRP subfamily.

It catalyses the reaction [pyruvate, water dikinase] + ADP = [pyruvate, water dikinase]-phosphate + AMP + H(+). It carries out the reaction [pyruvate, water dikinase]-phosphate + phosphate + H(+) = [pyruvate, water dikinase] + diphosphate. In terms of biological role, bifunctional serine/threonine kinase and phosphorylase involved in the regulation of the phosphoenolpyruvate synthase (PEPS) by catalyzing its phosphorylation/dephosphorylation. The chain is Putative phosphoenolpyruvate synthase regulatory protein from Citrobacter koseri (strain ATCC BAA-895 / CDC 4225-83 / SGSC4696).